The sequence spans 297 residues: Protein BCCIP homolog (297 aa).

A disordered region spans residues methionine 1–asparagine 40.

Belongs to the BCP1 family.

In Drosophila melanogaster (Fruit fly), this protein is Protein BCCIP homolog.